A 518-amino-acid chain; its full sequence is 3-phosphoshikimate 1-carboxyvinyltransferase 1, chloroplastic (518 aa).

Residues 1-74 (MAQISSMGQG…RISASVVTAQ (74 aa)) constitute a chloroplast transit peptide. The 3-phosphoshikimate site is built by Lys97, Ser98, and Arg102. Lys97 is a binding site for phosphoenolpyruvate. Phosphoenolpyruvate-binding residues include Gly175 and Arg205. 3-phosphoshikimate contacts are provided by Ser252, Ser253, Gln254, Ser280, Asp405, and Lys432. Gln254 is a binding site for phosphoenolpyruvate. Residue Asp405 is the Proton acceptor of the active site. Residues Arg436, Arg478, and Lys503 each coordinate phosphoenolpyruvate.

Belongs to the EPSP synthase family.

The protein localises to the plastid. Its subcellular location is the chloroplast. The catalysed reaction is 3-phosphoshikimate + phosphoenolpyruvate = 5-O-(1-carboxyvinyl)-3-phosphoshikimate + phosphate. It participates in metabolic intermediate biosynthesis; chorismate biosynthesis; chorismate from D-erythrose 4-phosphate and phosphoenolpyruvate: step 6/7. In terms of biological role, catalyzes the transfer of the enolpyruvyl moiety of phosphoenolpyruvate (PEP) to the 5-hydroxyl of shikimate-3-phosphate (S3P) to produce enolpyruvyl shikimate-3-phosphate and inorganic phosphate. The polypeptide is 3-phosphoshikimate 1-carboxyvinyltransferase 1, chloroplastic (EPSPS-1) (Nicotiana tabacum (Common tobacco)).